Reading from the N-terminus, the 300-residue chain is 1D-myo-inositol 2-acetamido-2-deoxy-alpha-D-glucopyranoside deacetylase (300 aa).

Zn(2+)-binding residues include His-13, Asp-16, and His-147.

Belongs to the MshB deacetylase family. Requires Zn(2+) as cofactor.

The enzyme catalyses 1D-myo-inositol 2-acetamido-2-deoxy-alpha-D-glucopyranoside + H2O = 1D-myo-inositol 2-amino-2-deoxy-alpha-D-glucopyranoside + acetate. In terms of biological role, catalyzes the deacetylation of 1D-myo-inositol 2-acetamido-2-deoxy-alpha-D-glucopyranoside (GlcNAc-Ins) in the mycothiol biosynthesis pathway. In Mycobacterium avium (strain 104), this protein is 1D-myo-inositol 2-acetamido-2-deoxy-alpha-D-glucopyranoside deacetylase.